We begin with the raw amino-acid sequence, 306 residues long: MATH domain and coiled-coil domain-containing protein At3g29580 (306 aa).

Residues 6–132 (DNKFTWVIKN…NGEIKIVVEF (127 aa)) enclose the MATH domain. Residues 253-298 (FKLDWLEKKLNEVLEKKEKEESYETRMREIEEEMKDLKAKALDVGA) are a coiled coil.

This is MATH domain and coiled-coil domain-containing protein At3g29580 from Arabidopsis thaliana (Mouse-ear cress).